Reading from the N-terminus, the 305-residue chain is Methionyl-tRNA formyltransferase (305 aa).

Residue 111–114 (SLLP) coordinates (6S)-5,6,7,8-tetrahydrofolate.

Belongs to the Fmt family.

It catalyses the reaction L-methionyl-tRNA(fMet) + (6R)-10-formyltetrahydrofolate = N-formyl-L-methionyl-tRNA(fMet) + (6S)-5,6,7,8-tetrahydrofolate + H(+). Attaches a formyl group to the free amino group of methionyl-tRNA(fMet). The formyl group appears to play a dual role in the initiator identity of N-formylmethionyl-tRNA by promoting its recognition by IF2 and preventing the misappropriation of this tRNA by the elongation apparatus. The polypeptide is Methionyl-tRNA formyltransferase (Campylobacter jejuni (strain RM1221)).